The following is a 108-amino-acid chain: Integration host factor subunit alpha (108 aa).

Belongs to the bacterial histone-like protein family. As to quaternary structure, heterodimer of an alpha and a beta chain.

Functionally, this protein is one of the two subunits of integration host factor, a specific DNA-binding protein that functions in genetic recombination as well as in transcriptional and translational control. The protein is Integration host factor subunit alpha of Methylorubrum extorquens (strain CM4 / NCIMB 13688) (Methylobacterium extorquens).